The sequence spans 426 residues: Dihydroorotase (426 aa).

His-58 and His-60 together coordinate Zn(2+). Substrate-binding positions include 60–62 (HLR) and Asn-92. Zn(2+)-binding residues include Asp-150, His-177, and His-230. Asn-276 lines the substrate pocket. Asp-303 serves as a coordination point for Zn(2+). Asp-303 is a catalytic residue. Residues His-307 and 321–322 (FG) contribute to the substrate site.

Belongs to the metallo-dependent hydrolases superfamily. DHOase family. Class I DHOase subfamily. Requires Zn(2+) as cofactor.

It carries out the reaction (S)-dihydroorotate + H2O = N-carbamoyl-L-aspartate + H(+). The protein operates within pyrimidine metabolism; UMP biosynthesis via de novo pathway; (S)-dihydroorotate from bicarbonate: step 3/3. In terms of biological role, catalyzes the reversible cyclization of carbamoyl aspartate to dihydroorotate. The chain is Dihydroorotase from Listeria welshimeri serovar 6b (strain ATCC 35897 / DSM 20650 / CCUG 15529 / CIP 8149 / NCTC 11857 / SLCC 5334 / V8).